The following is a 108-amino-acid chain: UPF0060 membrane protein CJA_3703 (108 aa).

A run of 4 helical transmembrane segments spans residues 6 to 26 (LLFVVTALAEIIGCFLPYLWL), 31 to 51 (SIWLLLPAALSLALFAWLLTL), 61 to 81 (AAYGGVYVAVALLWLYWVDGV), and 85 to 105 (AYDWAGAAVALLGMAIIAMGW).

Belongs to the UPF0060 family.

It is found in the cell inner membrane. This Cellvibrio japonicus (strain Ueda107) (Pseudomonas fluorescens subsp. cellulosa) protein is UPF0060 membrane protein CJA_3703.